Reading from the N-terminus, the 210-residue chain is Probable glutathione S-transferase gst-36 (210 aa).

Residues 2 to 79 form the GST N-terminal domain; it reads PHFKFYYFDV…YLGHQFHRAG (78 aa). Residues Tyr-8, Trp-39, Lys-43, 49-51, and 63-64 each bind glutathione; these read GQV and QT. The 130-residue stretch at 81–210 folds into the GST C-terminal domain; sequence NAVDCARLDM…YVSQRKATPA (130 aa).

It belongs to the GST superfamily. Sigma family.

It catalyses the reaction RX + glutathione = an S-substituted glutathione + a halide anion + H(+). Conjugation of reduced glutathione to a wide number of exogenous and endogenous hydrophobic electrophiles. The polypeptide is Probable glutathione S-transferase gst-36 (gst-36) (Caenorhabditis elegans).